The sequence spans 1158 residues: ATP-dependent helicase/deoxyribonuclease subunit B (1158 aa).

The protein belongs to the helicase family. AddB/RexB type 2 subfamily. In terms of assembly, heterodimer of AddA and RexB. Mg(2+) is required as a cofactor.

The heterodimer acts as both an ATP-dependent DNA helicase and an ATP-dependent, dual-direction single-stranded exonuclease. Recognizes the chi site generating a DNA molecule suitable for the initiation of homologous recombination. This subunit has 5' -&gt; 3' nuclease activity but not helicase activity. In Lactobacillus gasseri (strain ATCC 33323 / DSM 20243 / BCRC 14619 / CIP 102991 / JCM 1131 / KCTC 3163 / NCIMB 11718 / NCTC 13722 / AM63), this protein is ATP-dependent helicase/deoxyribonuclease subunit B.